The primary structure comprises 304 residues: Galactofuranosyltransferase GlfT1 (304 aa).

The protein belongs to the glycosyltransferase 2 family. In terms of assembly, is probably part of an AG biosynthetic complex.

It is found in the cell membrane. Its subcellular location is the secreted. The protein resides in the cell wall. The enzyme catalyses alpha-L-rhamnosyl-(1-&gt;3)-N-acetyl-alpha-D-glucosaminyl-diphospho-trans,octa-cis-decaprenol + 2 UDP-alpha-D-galactofuranose = beta-D-galactofuranosyl-(1-&gt;5)-beta-D-galactofuranosyl-(1-&gt;4)-alpha-L-rhamnosyl-(1-&gt;3)-N-acetyl-alpha-D-glucosaminyl-diphospho-trans,octa-cis-decaprenol + 2 UDP + 2 H(+). It functions in the pathway cell wall biogenesis; cell wall polysaccharide biosynthesis. In terms of biological role, involved in the biosynthesis of the arabinogalactan (AG) region of the mycolylarabinogalactan-peptidoglycan (mAGP) complex, an essential component of the mycobacterial cell wall. Catalyzes the transfer of the first two galactofuranosyl (Galf) units from UDP-galactofuranose (UDP-Galf) onto the rhamnosyl-GlcNAc-diphospho-decaprenol (Rha-GlcNAc-PP-C50) acceptor, yielding galactofuranosyl-galactofuranosyl-rhamnosyl-GlcNAc-diphospho-decaprenol (Galf-Galf-Rha-GlcNAc-PP-C50). Thus, GlfT1 is the initiator of galactan synthesis, while GlfT2 continues with the subsequent polymerization events. This Mycobacterium tuberculosis (strain CDC 1551 / Oshkosh) protein is Galactofuranosyltransferase GlfT1.